The sequence spans 181 residues: Trans-acting factor D (181 aa).

Its function is as follows. Plays a role in 2-micron plasmid partitioning. Antagonizes transcriptional repression of recombinase FLP by REP1-REP2. Regulates both stability and copy number of the plasmid by blocking the formation of the REP1-REP2 repressor complex. In Saccharomyces cerevisiae (strain ATCC 204508 / S288c) (Baker's yeast), this protein is Trans-acting factor D.